The chain runs to 510 residues: uncharacterized protein (510 aa).

The protein belongs to the phage portal family. PBSX subfamily.

This is an uncharacterized protein from Bacillus subtilis (strain 168).